A 468-amino-acid chain; its full sequence is Serine/threonine-protein phosphatase 2A 55 kDa regulatory subunit B beta isoform (468 aa).

WD repeat units lie at residues 47–86, 112–153, 196–234, 245–285, 304–342, 359–400, and 435–468; these read SSAD…KNQP, EIEE…KRPE, AHTY…RSFN, ELTE…LCDK, EIIS…RPIE, ENDC…DVTL, and DFSK…DKVN.

The protein belongs to the phosphatase 2A regulatory subunit B family. In terms of assembly, PP2A consists of a common heterodimeric core enzyme, composed of a 36 kDa catalytic subunit (subunit C) and a 65 kDa constant regulatory subunit (PR65 or subunit A), that associates with a variety of regulatory subunits.

It localises to the cytoplasm. The protein resides in the cytoskeleton. The protein localises to the membrane. Its function is as follows. The B regulatory subunit might modulate substrate selectivity and catalytic activity, and might also direct the localization of the catalytic enzyme to a particular subcellular compartment. Negatively controls the initiation of oocyte maturation. The chain is Serine/threonine-protein phosphatase 2A 55 kDa regulatory subunit B beta isoform (ppp2r2b) from Xenopus laevis (African clawed frog).